We begin with the raw amino-acid sequence, 187 residues long: Ribosome-recycling factor (187 aa).

Belongs to the RRF family.

The protein localises to the cytoplasm. In terms of biological role, responsible for the release of ribosomes from messenger RNA at the termination of protein biosynthesis. May increase the efficiency of translation by recycling ribosomes from one round of translation to another. This is Ribosome-recycling factor from Anaeromyxobacter sp. (strain Fw109-5).